A 278-amino-acid polypeptide reads, in one-letter code: MSKANISSKLKKVVESIYNPKLADSWDNTGLLLEAPFPRTNASSVLLTIDLTEKVAEEAISNKLVSSIVAYHPIIFRGLKAITMEDPQQRSLLKLAAEGIHVYSPHTAVDAAVDGVNDWLAQGIAGGRNNIKSVVPTQQNSVMAEAEGYGRICELKIPTTLRELVQRAKELTGLQYVQVCAPNGLDSHISKVSLCAGSGGSVVMNTDADLYFTGELSHHQVLAAMAKGISVILCGHSNTERGYLKDVMCQKLASSFHKEGVDANVIVSSMDADPLTTM.

The protein belongs to the GTP cyclohydrolase I type 2/NIF3 family.

The protein is Protein NIF3 homolog of Schizosaccharomyces pombe (strain 972 / ATCC 24843) (Fission yeast).